The sequence spans 415 residues: Tumor necrosis factor receptor superfamily member 3 (415 aa).

Positions 1–30 (MRLPRASSPCGLAWGPLLLGLSGLLVASQP) are cleaved as a signal peptide. Residues 31-223 (QLVPPYRIEN…NPPEPGAMLL (193 aa)) are Extracellular-facing. A glycan (N-linked (GlcNAc...) asparagine) is linked at Asn-40. TNFR-Cys repeat units follow at residues 42 to 81 (TCWD…TVCK), 82 to 124 (TCPH…KAEC), 125 to 170 (RCQP…VNCV), and 171 to 213 (PCKP…TICK). Cystine bridges form between Cys-43–Cys-58, Cys-59–Cys-72, Cys-62–Cys-80, Cys-83–Cys-98, Cys-101–Cys-116, Cys-104–Cys-124, Cys-126–Cys-132, Cys-139–Cys-150, Cys-142–Cys-169, and Cys-172–Cys-187. N-linked (GlcNAc...) asparagine glycosylation occurs at Asn-179. Residues 224 to 244 (LAILLSLVLFLLFTTVLACAW) traverse the membrane as a helical segment. Residues 245–415 (MRHPSLCRKL…ETETLGCQDL (171 aa)) lie on the Cytoplasmic side of the membrane. The segment at 261–304 (HPEGEESPPCPAPRADPHFPDLAEPLLPMSGDLSPSPAGPPTAP) is disordered. Residue Ser-315 is modified to Phosphoserine. The interval 361 to 399 (LGGTRGPGDPPAPPEPPYPTPEEGAPGPSELSTPYQEDG) is disordered. Positions 368–380 (GDPPAPPEPPYPT) are enriched in pro residues.

In terms of assembly, self-associates; dimerization and trimerization are promoted by lymphotoxin (LTA(3)). Associates with TRAF3. Associates with TRAF4. Associates with TRAF5.

It is found in the membrane. Functionally, receptor for the heterotrimeric lymphotoxin containing LTA and LTB, and for TNFS14/LIGHT. Activates NF-kappa-B signaling upon stimulation with lymphotoxin. Promotes apoptosis via TRAF3 and TRAF5. May play a role in the development of lymphoid organs. In terms of biological role, (Microbial infection) Plays a role in host defense against Zika virus infection. The chain is Tumor necrosis factor receptor superfamily member 3 (Ltbr) from Mus musculus (Mouse).